Here is a 612-residue protein sequence, read N- to C-terminus: DEAD-box ATP-dependent RNA helicase 11 (612 aa).

Disordered regions lie at residues methionine 1 to glycine 70 and glycine 83 to arginine 104. Serine 2 is modified (N-acetylserine). 2 stretches are compositionally biased toward gly residues: residues serine 61–glycine 70 and glycine 83–tryptophan 94. Positions asparagine 151–arginine 179 match the Q motif motif. The Helicase ATP-binding domain maps to isoleucine 182–leucine 366. An ATP-binding site is contributed by alanine 195–threonine 202. Residues aspartate 310–aspartate 313 carry the DEAD box motif. A Helicase C-terminal domain is found at leucine 377–alanine 542. Residues phenylalanine 547–aspartate 583 are disordered. Over residues glycine 559 to serine 568 the composition is skewed to basic and acidic residues. Residues serine 570–aspartate 583 show a composition bias toward gly residues.

The protein belongs to the DEAD box helicase family. DDX3/DED1 subfamily.

The enzyme catalyses ATP + H2O = ADP + phosphate + H(+). The sequence is that of DEAD-box ATP-dependent RNA helicase 11 (RH11) from Arabidopsis thaliana (Mouse-ear cress).